A 579-amino-acid chain; its full sequence is CTP synthase 1 (579 aa).

In terms of domain architecture, Glutamine amidotransferase type-1 spans 305 to 559 (KIALVGKYTN…LGLVAASAGI (255 aa)). Cys-404 functions as the For GATase activity in the catalytic mechanism. Lys-422 is covalently cross-linked (Glycyl lysine isopeptide (Lys-Gly) (interchain with G-Cter in ubiquitin)). Residues His-535 and Glu-537 each act as for GATase activity in the active site.

It belongs to the CTP synthase family. In terms of assembly, homodimer. Oligomerizes to a tetramer in the presence of its substrates UTP and ATP.

The catalysed reaction is UTP + L-glutamine + ATP + H2O = CTP + L-glutamate + ADP + phosphate + 2 H(+). The protein operates within pyrimidine metabolism; CTP biosynthesis via de novo pathway; CTP from UDP: step 2/2. With respect to regulation, activated by GTP and inhibited by CTP. In terms of biological role, catalyzes the ATP-dependent amination of UTP to CTP with either L-glutamine or ammonia as the source of nitrogen. The chain is CTP synthase 1 (URA7) from Saccharomyces cerevisiae (strain ATCC 204508 / S288c) (Baker's yeast).